Consider the following 431-residue polypeptide: Histidinol dehydrogenase (431 aa).

Residues Tyr-129, Gln-191, and Asn-214 each contribute to the NAD(+) site. Residues Ser-237, Gln-259, and His-262 each contribute to the substrate site. Gln-259 and His-262 together coordinate Zn(2+). Catalysis depends on proton acceptor residues Glu-327 and His-328. Substrate is bound by residues His-328, Asp-361, Glu-415, and His-420. Residue Asp-361 coordinates Zn(2+). His-420 contacts Zn(2+).

This sequence belongs to the histidinol dehydrogenase family. Zn(2+) is required as a cofactor.

The enzyme catalyses L-histidinol + 2 NAD(+) + H2O = L-histidine + 2 NADH + 3 H(+). Its pathway is amino-acid biosynthesis; L-histidine biosynthesis; L-histidine from 5-phospho-alpha-D-ribose 1-diphosphate: step 9/9. In terms of biological role, catalyzes the sequential NAD-dependent oxidations of L-histidinol to L-histidinaldehyde and then to L-histidine. This Lactococcus lactis subsp. lactis (strain IL1403) (Streptococcus lactis) protein is Histidinol dehydrogenase (hisD).